Consider the following 160-residue polypeptide: MGVTKKPDLTDPVLRAKLAKGMGHNYYGEPAWPNDLLYIFPVVIFGTIACNVGLAVLEPSMIGEPANPFATPLEILPEWYFFPVFQILRTVPNKLLGVLLMAAVPAGLLTVPFLENVNKFQNPFRRPVATTVFLFGTVVALWLGIGAALPIDKSLTLGLF.

3 helical membrane-spanning segments follow: residues 36-56 (LLYI…GLAV), 95-115 (LLGV…PFLE), and 131-151 (TVFL…ALPI).

Belongs to the cytochrome b family. PetD subfamily. As to quaternary structure, the 4 large subunits of the cytochrome b6-f complex are cytochrome b6, subunit IV (17 kDa polypeptide, petD), cytochrome f and the Rieske protein, while the 4 small subunits are petG, petL, petM and petN. The complex functions as a dimer.

It localises to the plastid. Its subcellular location is the chloroplast thylakoid membrane. Functionally, component of the cytochrome b6-f complex, which mediates electron transfer between photosystem II (PSII) and photosystem I (PSI), cyclic electron flow around PSI, and state transitions. This is Cytochrome b6-f complex subunit 4 from Spirogyra maxima (Green alga).